The primary structure comprises 98 residues: Ubiquitin-related modifier 1 (98 aa).

1-thioglycine is present on glycine 98. Residue glycine 98 forms a Glycyl lysine isopeptide (Gly-Lys) (interchain with K-? in acceptor proteins) linkage.

This sequence belongs to the URM1 family. C-terminal thiocarboxylation occurs in 2 steps, it is first acyl-adenylated (-COAMP) via the hesA/moeB/thiF part of UBA4, then thiocarboxylated (-COSH) via the rhodanese domain of UBA4.

Its subcellular location is the cytoplasm. The protein operates within tRNA modification; 5-methoxycarbonylmethyl-2-thiouridine-tRNA biosynthesis. Its function is as follows. Acts as a sulfur carrier required for 2-thiolation of mcm(5)S(2)U at tRNA wobble positions of cytosolic tRNA(Lys), tRNA(Glu) and tRNA(Gln). Serves as sulfur donor in tRNA 2-thiolation reaction by being thiocarboxylated (-COSH) at its C-terminus by the MOCS3 homolog UBA4. The sulfur is then transferred to tRNA to form 2-thiolation of mcm(5)S(2)U. Prior mcm(5) tRNA modification by the elongator complex is required for 2-thiolation. Also acts as a ubiquitin-like protein (UBL) that is covalently conjugated via an isopeptide bond to lysine residues of target proteins such as AHP1. The thiocarboxylated form serves as substrate for conjugation and oxidative stress specifically induces the formation of UBL-protein conjugates. In Candida glabrata (strain ATCC 2001 / BCRC 20586 / JCM 3761 / NBRC 0622 / NRRL Y-65 / CBS 138) (Yeast), this protein is Ubiquitin-related modifier 1.